The primary structure comprises 482 residues: Magnesium-dependent glutamate N-prenyltransferase (482 aa).

Mg(2+)-binding residues include N351, T355, E359, and F366.

The protein belongs to the terpene synthase family. It depends on Mg(2+) as a cofactor.

The catalysed reaction is (2E)-geranyl diphosphate + L-glutamate = N-geranyl-L-glutamate + diphosphate. It participates in secondary metabolite biosynthesis. Magnesium-dependent glutamate N-prenyltransferase: part of the gene cluster that mediates the biosynthesis of domoic acid (DA) and derivatives, natural products with neurochemical activity acting as ionotropic glutamate receptor (iGluR) agonists, thus being neurotoxins causing amnesic shellfish poisoning (ASP). Catalyzes the conversion of L-glutamic acid (L-Glu) to N-geranyl-L-glutamic acid (NGG) in the presence of geranyl diphosphate (GPP). Also able to catalyze the formation of farnesyl-L-glutamate from farnesyl diphosphate (FPP). Cannot use dimethylallyl diphosphate (DMAPP) as substrate. The polypeptide is Magnesium-dependent glutamate N-prenyltransferase (Pseudo-nitzschia multiseries (Marine planktonic diatom)).